The chain runs to 679 residues: Glycine--tRNA ligase beta subunit (679 aa).

The protein belongs to the class-II aminoacyl-tRNA synthetase family. Tetramer of two alpha and two beta subunits.

The protein localises to the cytoplasm. It catalyses the reaction tRNA(Gly) + glycine + ATP = glycyl-tRNA(Gly) + AMP + diphosphate. The chain is Glycine--tRNA ligase beta subunit from Streptococcus equi subsp. zooepidemicus (strain H70).